A 577-amino-acid chain; its full sequence is Arginine--tRNA ligase (577 aa).

The 'HIGH' region motif lies at P122 to H132.

Belongs to the class-I aminoacyl-tRNA synthetase family. Monomer.

It localises to the cytoplasm. The enzyme catalyses tRNA(Arg) + L-arginine + ATP = L-arginyl-tRNA(Arg) + AMP + diphosphate. This is Arginine--tRNA ligase from Salmonella schwarzengrund (strain CVM19633).